The chain runs to 389 residues: MEMKDYIFTSESVSEGHPDKVADQVSDAILDAILTQDKRARVACETLVTTGMAVIAGEITTTAVVDYPKVVRETIKEIGYNDSAMGFDWETCAVLVSIDKQSPDISQGVTEGEGMFKEQGAGDQGLMFGYACNETPELMPMTIMYSHRLTQKLAEVRKNGTLDFLRPDSKSQVSIQYVDDRPVRVDTVVISSQHTPEVSYETIKEGIIEEVVKKIIPVELMDDKTRFLINPTGRFVIGGPMGDCGLTGRKIIVDSYGGHGAHGGGAFSGKDPSKVDRSAAYMGRYVAKNLVAAGLCERCEVQVAYAIGVAEPVSVMVDTAGTGKIPSARIAEIIREVFDLRPRAIIEQLDLLRPIYRKTAAYGHFGRELPEFTWERTDKIDIIRQKAGI.

Residue His17 participates in ATP binding. Asp19 contributes to the Mg(2+) binding site. A K(+)-binding site is contributed by Glu45. Residues Glu58 and Gln101 each coordinate L-methionine. The flexible loop stretch occupies residues 101–111; it reads QSPDISQGVTE. Residues 168-170, 234-235, Asp243, 249-250, Ala266, and Lys270 contribute to the ATP site; these read DSK, RF, and RK. Asp243 contacts L-methionine. Residue Lys274 participates in L-methionine binding.

This sequence belongs to the AdoMet synthase family. Homotetramer; dimer of dimers. Mg(2+) is required as a cofactor. It depends on K(+) as a cofactor.

It localises to the cytoplasm. The enzyme catalyses L-methionine + ATP + H2O = S-adenosyl-L-methionine + phosphate + diphosphate. It participates in amino-acid biosynthesis; S-adenosyl-L-methionine biosynthesis; S-adenosyl-L-methionine from L-methionine: step 1/1. Its function is as follows. Catalyzes the formation of S-adenosylmethionine (AdoMet) from methionine and ATP. The overall synthetic reaction is composed of two sequential steps, AdoMet formation and the subsequent tripolyphosphate hydrolysis which occurs prior to release of AdoMet from the enzyme. The sequence is that of S-adenosylmethionine synthase from Geobacter sulfurreducens (strain ATCC 51573 / DSM 12127 / PCA).